A 64-amino-acid polypeptide reads, in one-letter code: Large ribosomal subunit protein bL32 (64 aa).

Residues M1 to R16 show a composition bias toward basic residues. Positions M1–E64 are disordered.

The protein belongs to the bacterial ribosomal protein bL32 family.

This is Large ribosomal subunit protein bL32 from Coxiella burnetii (strain CbuK_Q154) (Coxiella burnetii (strain Q154)).